Consider the following 253-residue polypeptide: MICOS complex subunit mic25-b (253 aa).

The N-myristoyl glycine moiety is linked to residue Gly2. The disordered stretch occupies residues 38-82 (KDQSTWAASGAASGSATVPSKVGSSASHPAAASKDGAHKPTAAGV). The span at 44–53 (AASGAASGSA) shows a compositional bias: low complexity. The stretch at 87–116 (AEEDLYRRYEREQTLIQEELARLAKREKDA) forms a coiled coil. A CHCH domain is found at 206–248 (DPVCMDLQSNILKCYAENKQERLNCSDLAKEYQKCVSAAQKNL). Short sequence motifs (cx9C motif) lie at residues 209–219 (CMDLQSNILKC) and 230–240 (CSDLAKEYQKC). 2 cysteine pairs are disulfide-bonded: Cys209-Cys240 and Cys219-Cys230.

This sequence belongs to the MICOS complex subunit Mic19 family. Metazoan Mic25 subfamily. In terms of assembly, component of the mitochondrial contact site and cristae organizing system (MICOS) complex (also known as MINOS or MitOS complex).

The protein resides in the mitochondrion inner membrane. Functionally, component of the MICOS complex, a large protein complex of the mitochondrial inner membrane that plays crucial roles in the maintenance of crista junctions, inner membrane architecture, and formation of contact sites to the outer membrane. The protein is MICOS complex subunit mic25-b (chchd6-b) of Xenopus laevis (African clawed frog).